The following is a 302-amino-acid chain: Segregation and condensation protein A (302 aa).

The protein belongs to the ScpA family. Component of a cohesin-like complex composed of ScpA, ScpB and the Smc homodimer, in which ScpA and ScpB bind to the head domain of Smc. The presence of the three proteins is required for the association of the complex with DNA.

The protein localises to the cytoplasm. Its function is as follows. Participates in chromosomal partition during cell division. May act via the formation of a condensin-like complex containing Smc and ScpB that pull DNA away from mid-cell into both cell halves. This Xylella fastidiosa (strain Temecula1 / ATCC 700964) protein is Segregation and condensation protein A.